A 74-amino-acid chain; its full sequence is Molt-inhibiting hormone (74 aa).

Position 1 is a pyrrolidone carboxylic acid (Gln1). 3 cysteine pairs are disulfide-bonded: Cys7–Cys43, Cys23–Cys39, and Cys26–Cys52. Residue Val72 is modified to Valine amide.

It localises to the secreted. Functionally, inhibits Y-organs where molting hormone (ecdysteroid) is secreted. A molting cycle is initiated when MIH secretion diminishes or stops. The sequence is that of Molt-inhibiting hormone from Procambarus bouvieri (Mexican crayfish).